The following is a 305-amino-acid chain: Mas-related G-protein coupled receptor member A7 (305 aa).

Residues 1-17 (MDETSPRSIDIESLIPN) lie on the Extracellular side of the membrane. Residues 18 to 38 (LMIIIFGLVGLTGNAIVLWLL) traverse the membrane as a helical segment. The Cytoplasmic portion of the chain corresponds to 39–46 (GFCLHRNA). A helical transmembrane segment spans residues 47–67 (FLVYILNLALADFLFLLCHFI). The Extracellular segment spans residues 68-81 (NSAMFLLKVPIPNG). Residues 82–102 (IFVYCFYTIKMVLYITGLSML) form a helical membrane-spanning segment. At 103-129 (SAISTERCLSVLCPIWYHCRRPEHTST) the chain is on the cytoplasmic side. The helical transmembrane segment at 130–150 (VMCAVIWIFSVLICILKEYFC) threads the bilayer. Over 151–167 (DFFGTKLGNYYVCQASN) the chain is Extracellular. Residues 168–188 (FFMGAYLMFLFVVLCLSTLAL) traverse the membrane as a helical segment. The Cytoplasmic segment spans residues 189–211 (LARLFCGAEKMKFTRLFVTIMLT). A helical membrane pass occupies residues 212–232 (ILVFLLCGLPWGFFWFLLIWI). Residues 233-244 (KGGFSVLDYRLY) are Extracellular-facing. A helical membrane pass occupies residues 245 to 265 (LASIVLTVVNSCANPIIYFFV). Residues 266–305 (GSFRHRLKHQTLKMVLQSALQDTPETHENMVEMSRIKAEQ) are Cytoplasmic-facing.

This sequence belongs to the G-protein coupled receptor 1 family. Mas subfamily. In terms of tissue distribution, expressed in a subset of sensory neurons that includes nociceptors. Expressed in the subclass of non-peptidergic sensory neurons that are IB4(+) and VR1(-).

The protein resides in the cell membrane. In terms of biological role, orphan receptor. May be a receptor for RFamide-family neuropeptides such as NPFF and NPAF, which are analgesic in vivo. May regulate nociceptor function and/or development, including the sensation or modulation of pain. The protein is Mas-related G-protein coupled receptor member A7 (Mrgpra7) of Mus musculus (Mouse).